The sequence spans 271 residues: Metal-staphylopine import system ATP-binding protein CntD (271 aa).

One can recognise an ABC transporter domain in the interval 6–251; the sequence is VKHLTITDTW…PEHVYTKYLL (246 aa). Residue 38-45 participates in ATP binding; sequence GESGSGKS.

The protein belongs to the ABC transporter superfamily. In terms of assembly, the complex is composed of two ATP-binding proteins (CntD and CntF), two transmembrane proteins (CntB and CntC) and a solute-binding protein (CntA).

It is found in the cell membrane. With respect to regulation, nickel/cobalt import is reduced in the presence of zinc. Functionally, part of the ABC transporter complex CntABCDF (Opp1) involved in the uptake of metal in complex with the metallophore staphylopine (StP). Involved in the import of divalent metals ions such as nickel, cobalt and zinc. Probably responsible for energy coupling to the transport system. Plays a major role in nickel/cobalt import in zinc-depleted conditions. Contributes to virulence. Required for full urease activity in vitro. This is Metal-staphylopine import system ATP-binding protein CntD from Staphylococcus aureus (strain NCTC 8325 / PS 47).